The chain runs to 241 residues: Carboxy-S-adenosyl-L-methionine synthase (241 aa).

S-adenosyl-L-methionine-binding positions include Tyr38, 63–65 (GCS), 88–89 (DN), 116–117 (DI), Asn131, and Arg198.

It belongs to the class I-like SAM-binding methyltransferase superfamily. Cx-SAM synthase family. In terms of assembly, homodimer.

The catalysed reaction is prephenate + S-adenosyl-L-methionine = carboxy-S-adenosyl-L-methionine + 3-phenylpyruvate + H2O. Its function is as follows. Catalyzes the conversion of S-adenosyl-L-methionine (SAM) to carboxy-S-adenosyl-L-methionine (Cx-SAM). The protein is Carboxy-S-adenosyl-L-methionine synthase of Mannheimia succiniciproducens (strain KCTC 0769BP / MBEL55E).